A 364-amino-acid polypeptide reads, in one-letter code: tRNA 2-selenouridine synthase (364 aa).

The region spanning 14–137 is the Rhodanese domain; that stretch reads LLADTPLIDV…LRQTAIQATW (124 aa). C97 serves as the catalytic S-selanylcysteine intermediate.

Belongs to the SelU family. In terms of assembly, monomer.

It carries out the reaction 5-methylaminomethyl-2-thiouridine(34) in tRNA + selenophosphate + (2E)-geranyl diphosphate + H2O + H(+) = 5-methylaminomethyl-2-selenouridine(34) in tRNA + (2E)-thiogeraniol + phosphate + diphosphate. It catalyses the reaction 5-methylaminomethyl-2-thiouridine(34) in tRNA + (2E)-geranyl diphosphate = 5-methylaminomethyl-S-(2E)-geranyl-thiouridine(34) in tRNA + diphosphate. The enzyme catalyses 5-methylaminomethyl-S-(2E)-geranyl-thiouridine(34) in tRNA + selenophosphate + H(+) = 5-methylaminomethyl-2-(Se-phospho)selenouridine(34) in tRNA + (2E)-thiogeraniol. The catalysed reaction is 5-methylaminomethyl-2-(Se-phospho)selenouridine(34) in tRNA + H2O = 5-methylaminomethyl-2-selenouridine(34) in tRNA + phosphate. Its function is as follows. Involved in the post-transcriptional modification of the uridine at the wobble position (U34) of tRNA(Lys), tRNA(Glu) and tRNA(Gln). Catalyzes the conversion of 2-thiouridine (S2U-RNA) to 2-selenouridine (Se2U-RNA). Acts in a two-step process involving geranylation of 2-thiouridine (S2U) to S-geranyl-2-thiouridine (geS2U) and subsequent selenation of the latter derivative to 2-selenouridine (Se2U) in the tRNA chain. The polypeptide is tRNA 2-selenouridine synthase (Salmonella dublin (strain CT_02021853)).